Reading from the N-terminus, the 198-residue chain is Bcl-2-like protein 11 (198 aa).

The tract at residues 1 to 72 is disordered; it reads MAKQPSDVSS…PLAPPASPGP (72 aa). A Phosphoserine; by MAPK modification is found at S69. A phosphoserine mark is found at S77, S87, and S94. A BH3 motif is present at residues 148–162; it reads IAQELRRIGDEFNAY.

The protein belongs to the Bcl-2 family. In terms of assembly, forms heterodimers with a number of antiapoptotic Bcl-2 proteins, including MCL1, BCL2, BCL2L1 isoform Bcl-X(L), BCL2A1/BFL-1, BHRF1, and BCL2L2/BCLW. Does not heterodimerize with proapoptotic proteins such as BAD, BOK or BAK. Identified in a complex containing BCL2L11, DYNLL1 and BCL2L1 isoform Bcl-X(L); BH3 integrity is required for BCL2L1-binding. Interacts with YWHAZ. When phosphorylated, interacts with TRIM2; this interaction is associated with ubiquitination and degradation. Interacts with MCL1; may sequester BCL2L11 to prevent its pro-apoptotic activity. Interacts with GIMAP5. Interacts with BCL2L10/BCL-B. Interacts (when phosphorylated) with USP27X; the interaction leads to BCL2L11 deubiquitination and stabilization. Interacts with humanin; the interaction prevents BIM-induced apoptosis. As to quaternary structure, does not interact with humanin. In terms of assembly, interacts with BAX; the interaction may lead to BAX activation through conformational change. Does not interact with humanin. Interacts with BAX; the interaction may lead to BAX activation through conformational change. In terms of processing, phosphorylation at Ser-69 by MAPK1/MAPK3 leads to interaction with TRIM2 and polyubiquitination, followed by proteasomal degradation. Deubiquitination catalyzed by USP27X stabilizes the protein. Ubiquitination by TRIM2 following phosphorylation by MAPK1/MAPK3 leads to proteasomal degradation. Conversely, deubiquitination catalyzed by USP27X stabilizes the protein. In terms of tissue distribution, isoform BimEL, isoform BimL and isoform BimS are the predominant isoforms and are widely expressed with tissue-specific variation. Isoform Bim-gamma is most abundantly expressed in small intestine and colon, and in lower levels in spleen, prostate, testis, heart, liver and kidney.

It is found in the endomembrane system. Its subcellular location is the mitochondrion. Its function is as follows. Induces apoptosis and anoikis. Isoform BimL is more potent than isoform BimEL. Isoform Bim-alpha1, isoform Bim-alpha2 and isoform Bim-alpha3 induce apoptosis, although less potent than isoform BimEL, isoform BimL and isoform BimS. Isoform Bim-gamma induces apoptosis. Isoform Bim-alpha3 induces apoptosis possibly through a caspase-mediated pathway. Isoform BimAC and isoform BimABC lack the ability to induce apoptosis. This Homo sapiens (Human) protein is Bcl-2-like protein 11 (BCL2L11).